The following is a 440-amino-acid chain: Chromosome partition protein MukF (440 aa).

Positions 208–236 (LSETSGTLRELQDTLEAAGDKLQANLLRI) are leucine-zipper.

The protein belongs to the MukF family. In terms of assembly, interacts, and probably forms a ternary complex, with MukE and MukB via its C-terminal region. The complex formation is stimulated by calcium or magnesium. It is required for an interaction between MukE and MukB.

Its subcellular location is the cytoplasm. It localises to the nucleoid. Functionally, involved in chromosome condensation, segregation and cell cycle progression. May participate in facilitating chromosome segregation by condensation DNA from both sides of a centrally located replisome during cell division. Not required for mini-F plasmid partitioning. Probably acts via its interaction with MukB and MukE. Overexpression results in anucleate cells. It has a calcium binding activity. The sequence is that of Chromosome partition protein MukF from Escherichia coli (strain ATCC 8739 / DSM 1576 / NBRC 3972 / NCIMB 8545 / WDCM 00012 / Crooks).